The following is a 1061-amino-acid chain: Chimeric ERCC6-PGBD3 protein (1061 aa).

The tract at residues 1–39 (MPNEGIPHSSQTQEQDCLQSQPVSNNEEMAIKQESGGDG) is disordered. Residues 8-27 (HSSQTQEQDCLQSQPVSNNE) show a composition bias toward polar residues. Ser158 carries the post-translational modification Phosphoserine. Residue Lys255 forms a Glycyl lysine isopeptide (Lys-Gly) (interchain with G-Cter in SUMO2) linkage. Disordered regions lie at residues 287-323 (KQGC…VLSK), 344-466 (GKVG…QRLS), 494-521 (VIQP…INNL), and 537-573 (SDAE…SRRR). Over residues 353-363 (RPWESDMRPEA) the composition is skewed to basic and acidic residues. The span at 364-392 (EGDSEGEESEYFPTEEEEEEEDDEVEGAE) shows a compositional bias: acidic residues. Ser429 and Ser430 each carry phosphoserine. The segment covering 451–462 (RYRDDGDEDYYK) has biased composition (basic and acidic residues). Residues 506 to 515 (SDEESGDEEG) are compositionally biased toward acidic residues. A Phosphoserine modification is found at Ser554.

In terms of tissue distribution, expressed in heart and oocytes, but not in granulosa cells (at protein level).

It is found in the nucleus. Involved in repair of DNA damage following UV irradiation, acting either in the absence of ERCC6 or synergistically with ERCC6. Involved in the regulation of gene expression. In the absence of ERCC6, induces the expression of genes characteristic of interferon-like antiviral responses. This response is almost completely suppressed in the presence of ERCC6. In the presence of ERCC6, regulates the expression of genes involved in metabolism regulation, including IGFBP5 and IGFBP7. In vitro binds to PGBD3-related transposable elements, called MER85s; these non-autonomous 140 bp elements are characterized by the presence of PGBD3 terminal inverted repeats and the absence of internal transposase ORF. In Homo sapiens (Human), this protein is Chimeric ERCC6-PGBD3 protein.